The sequence spans 102 residues: Large ribosomal subunit protein bL21 (102 aa).

Belongs to the bacterial ribosomal protein bL21 family. As to quaternary structure, part of the 50S ribosomal subunit. Contacts protein L20.

In terms of biological role, this protein binds to 23S rRNA in the presence of protein L20. The sequence is that of Large ribosomal subunit protein bL21 from Cutibacterium acnes (strain DSM 16379 / KPA171202) (Propionibacterium acnes).